Reading from the N-terminus, the 28-residue chain is YDKVEFHITGXTKDTYSAFIQSLRTHLS.

This sequence belongs to the ribosome-inactivating protein family. Disulfide-linked heterodimer of A and B chains.

The catalysed reaction is Endohydrolysis of the N-glycosidic bond at one specific adenosine on the 28S rRNA.. Gal / GalNAc-specific lectin. Agglutinates both native and trypsin-treated rabbit erythrocytes but not human erythrocytes irrespective of blood group type. The protein is N-acetyl-D-galactosamine-binding lectin subunit A of Iris hollandica (Dutch iris).